The primary structure comprises 165 residues: Lithostathine-1 (165 aa).

The signal sequence occupies residues 1-21 (MARNAYFILLSCLIVLSPSQG). Gln22 carries the post-translational modification Pyrrolidone carboxylic acid. Residues 33-163 (ISCPEGSNAY…DAQYSFVCKF (131 aa)) enclose the C-type lectin domain. Cystine bridges form between Cys35/Cys46, Cys63/Cys161, and Cys136/Cys153. An N-linked (GlcNAc...) asparagine glycan is attached at Asn129.

As to expression, expressed only in regenerating islets and normal exocrine pancreas, but not in normal pancreatic islets. Expressed strongly in pancreas, moderately in gall bladder, and weakly in liver.

Its subcellular location is the secreted. In terms of biological role, might act as an inhibitor of spontaneous calcium carbonate precipitation. The polypeptide is Lithostathine-1 (Reg1) (Mus musculus (Mouse)).